A 364-amino-acid polypeptide reads, in one-letter code: tRNA-specific 2-thiouridylase MnmA 1 (364 aa).

Residues 11 to 18 and F37 contribute to the ATP site; that span reads GMSGGTDS. Residue C96 is the Nucleophile of the active site. A disulfide bridge links C96 with C193. G120 lines the ATP pocket. The interaction with tRNA stretch occupies residues 142-144; the sequence is KDQ. The active-site Cysteine persulfide intermediate is C193. Residues 309–310 are interaction with tRNA; sequence RY.

It belongs to the MnmA/TRMU family.

It localises to the cytoplasm. The enzyme catalyses S-sulfanyl-L-cysteinyl-[protein] + uridine(34) in tRNA + AH2 + ATP = 2-thiouridine(34) in tRNA + L-cysteinyl-[protein] + A + AMP + diphosphate + H(+). Catalyzes the 2-thiolation of uridine at the wobble position (U34) of tRNA, leading to the formation of s(2)U34. In Bacteroides fragilis (strain YCH46), this protein is tRNA-specific 2-thiouridylase MnmA 1.